Here is a 546-residue protein sequence, read N- to C-terminus: RuBisCO large subunit-binding protein subunit alpha, chloroplastic (546 aa).

The transit peptide at 1-6 (RFSVRA) directs the protein to the chloroplast. Residue Ser50 is modified to Phosphoserine.

It belongs to the chaperonin (HSP60) family. As to quaternary structure, oligomer of probably six alpha and six beta subunits.

The protein localises to the plastid. It localises to the chloroplast. Its function is as follows. This protein binds RuBisCO small and large subunits and is implicated in the assembly of the enzyme oligomer. The protein is RuBisCO large subunit-binding protein subunit alpha, chloroplastic of Brassica napus (Rape).